A 152-amino-acid polypeptide reads, in one-letter code: Non-specific lipid transfer protein GPI-anchored 8 (152 aa).

Residues 1–23 (MNITRILGVVTTVVILYSVQVTA) form the signal peptide. Cystine bridges form between Cys-42-Cys-56, Cys-57-Cys-98, and Cys-70-Cys-107. An N-linked (GlcNAc...) asparagine glycan is attached at Asn-108. Residue Ser-124 is the site of GPI-anchor amidated serine attachment. The propeptide at 125–152 (GNSFSTKKNTALAITFFGFSFVFLGMII) is removed in mature form.

Belongs to the plant LTP family.

Its subcellular location is the cell membrane. Its function is as follows. Probable lipid transfer protein. In Arabidopsis thaliana (Mouse-ear cress), this protein is Non-specific lipid transfer protein GPI-anchored 8.